Reading from the N-terminus, the 2642-residue chain is Fusarielin synthase FSL1 (2642 aa).

One can recognise a Ketosynthase family 3 (KS3) domain in the interval 6–450 (NEPIAIIGTG…GTNAHAILEA (445 aa)). Catalysis depends on for beta-ketoacyl synthase activity residues cysteine 179, histidine 318, and histidine 370. The segment at 566 to 890 (VFTGQGAQWA…PYTSALVRGK (325 aa)) is malonyl-CoA:ACP transacylase (MAT) domain. Serine 659 functions as the For malonyltransferase activity in the catalytic mechanism. The N-terminal hotdog fold stretch occupies residues 965–1101 (HDLLGIQTAD…GKVCIFLQTE (137 aa)). The segment at 965-1279 (HDLLGIQTAD…SFSPFAAATD (315 aa)) is dehydratase (DH) domain. The region spanning 965-1280 (HDLLGIQTAD…FSPFAAATDR (316 aa)) is the PKS/mFAS DH domain. Histidine 997 acts as the Proton acceptor; for dehydratase activity in catalysis. The tract at residues 1126–1280 (MAGIDVERFY…FSPFAAATDR (155 aa)) is C-terminal hotdog fold. The Proton donor; for dehydratase activity role is filled by aspartate 1189. Positions 1423–1622 (NYLDRYYTHA…GVDTNTPMPD (200 aa)) are methyltransferase (MET) domain. A ketoreductase (KR) domain region spans residues 2244 to 2423 (TYWMLGLTGD…GHNAAVIDIS (180 aa)). Positions 2556–2635 (QEVTSVLTSC…DLADYILESL (80 aa)) constitute a Carrier domain. An O-(pantetheine 4'-phosphoryl)serine modification is found at serine 2595.

Pantetheine 4'-phosphate is required as a cofactor.

It functions in the pathway secondary metabolite biosynthesis. Reducing polyketide synthase; part of the gene cluster that mediates the biosynthesis of fusarielins F, G and H, decaketide compounds with 5 methylations and a decaline core that act as mycoestrogens as they stimulate growth of MCF-7 breast cancer cells. The initial compound in the pathway is produced by the reducing polyketide synthase FSL1. FSL1 lacks an active enoyl reductase (ER) domain and biosynthesis of fusarielins relies on the trans-acting enoyl reductase FSL5, before it is released through hydrolysis catalyzed by the thioesterase FSL2. Fusarielins F, G, and H have a C11=C12 cis double bond and is fully reduced between C10 and C11 and between C12 and C13. FSL3 can be involved in the formation of the C11=C12 cis double bond by moving a hypothetical C10=C11 or C12=C13 trans double bond to form prefusarielin. Prefusarielin is oxygenated at C15 and C16 by the cytochrome P450 monooxygenase FSL4, resulting in fusarielin F, which subsequently is epoxidized into fusarielin G by the same enzyme. The final step in the pathway is a reduction of the carboxylic acid moiety to yield fusarielin H via a still undetermined mechanism. This Gibberella zeae (strain ATCC MYA-4620 / CBS 123657 / FGSC 9075 / NRRL 31084 / PH-1) (Wheat head blight fungus) protein is Fusarielin synthase FSL1.